Reading from the N-terminus, the 263-residue chain is Outer membrane lipoprotein 3 (263 aa).

The N-terminal stretch at 1–19 (MKIMKLAGAVAIFSLFLTA) is a signal peptide. The N-palmitoyl cysteine moiety is linked to residue Cys-20. The S-diacylglycerol cysteine moiety is linked to residue Cys-20.

Belongs to the NlpA lipoprotein family.

It localises to the cell outer membrane. The polypeptide is Outer membrane lipoprotein 3 (plpC) (Mannheimia haemolytica (Pasteurella haemolytica)).